Reading from the N-terminus, the 172-residue chain is Large ribosomal subunit protein uL10 (172 aa).

Belongs to the universal ribosomal protein uL10 family. As to quaternary structure, part of the ribosomal stalk of the 50S ribosomal subunit. The N-terminus interacts with L11 and the large rRNA to form the base of the stalk. The C-terminus forms an elongated spine to which L12 dimers bind in a sequential fashion forming a multimeric L10(L12)X complex.

Its function is as follows. Forms part of the ribosomal stalk, playing a central role in the interaction of the ribosome with GTP-bound translation factors. This Bradyrhizobium sp. (strain ORS 278) protein is Large ribosomal subunit protein uL10.